Consider the following 58-residue polypeptide: Basic phospholipase A2 homolog PocTX (58 aa).

A disulfide bridge connects residues Cys-29 and Cys-45.

As to expression, expressed by the venom gland.

Its subcellular location is the secreted. Its function is as follows. Wasp venom phospholipase A2 homolog that lacks enzymatic activity. This chain is Basic phospholipase A2 homolog PocTX, found in Polybia occidentalis (Paper wasp).